A 296-amino-acid chain; its full sequence is Protease HtpX homolog (296 aa).

The next 2 helical transmembrane spans lie at 14–34 (VVLLIVFFCLLAAIGAAVGYL) and 39–59 (YQFGLVLALIIGVIYAVSMIF). Position 143 (His143) interacts with Zn(2+). Residue Glu144 is part of the active site. His147 is a binding site for Zn(2+). Helical transmembrane passes span 158–178 (IAVALASAVTLISSIGSRMLF) and 195–215 (ILVLIFSILSLILAPLAASLV). Glu224 provides a ligand contact to Zn(2+).

The protein belongs to the peptidase M48B family. Zn(2+) is required as a cofactor.

It is found in the cell membrane. In Streptococcus agalactiae serotype III (strain NEM316), this protein is Protease HtpX homolog.